We begin with the raw amino-acid sequence, 162 residues long: Protein-export protein SecB (162 aa).

The protein belongs to the SecB family. In terms of assembly, homotetramer, a dimer of dimers. One homotetramer interacts with 1 SecA dimer.

It is found in the cytoplasm. Functionally, one of the proteins required for the normal export of preproteins out of the cell cytoplasm. It is a molecular chaperone that binds to a subset of precursor proteins, maintaining them in a translocation-competent state. It also specifically binds to its receptor SecA. This is Protein-export protein SecB from Pseudomonas savastanoi pv. phaseolicola (strain 1448A / Race 6) (Pseudomonas syringae pv. phaseolicola (strain 1448A / Race 6)).